A 70-amino-acid chain; its full sequence is DNA-directed RNA polymerase subunit omega (70 aa).

Belongs to the RNA polymerase subunit omega family. As to quaternary structure, the RNAP catalytic core consists of 2 alpha, 1 beta, 1 beta' and 1 omega subunit. When a sigma factor is associated with the core the holoenzyme is formed, which can initiate transcription.

The enzyme catalyses RNA(n) + a ribonucleoside 5'-triphosphate = RNA(n+1) + diphosphate. Its function is as follows. Promotes RNA polymerase assembly. Latches the N- and C-terminal regions of the beta' subunit thereby facilitating its interaction with the beta and alpha subunits. This chain is DNA-directed RNA polymerase subunit omega, found in Caldanaerobacter subterraneus subsp. tengcongensis (strain DSM 15242 / JCM 11007 / NBRC 100824 / MB4) (Thermoanaerobacter tengcongensis).